Reading from the N-terminus, the 394-residue chain is Mitogen-activated protein kinase 2 (394 aa).

The span at 1–31 (MRMEGGGGGGHGHHGGGGGGHGHHGGIGGGE) shows a compositional bias: gly residues. The interval 1–33 (MRMEGGGGGGHGHHGGGGGGHGHHGGIGGGEAQ) is disordered. Positions 61–347 (VPPIRPVGRG…VDEALCHPYL (287 aa)) constitute a Protein kinase domain. Residues 67 to 75 (VGRGACGII) and Lys-90 contribute to the ATP site. Asp-187 (proton acceptor) is an active-site residue. Tyr-221 is modified (phosphotyrosine).

This sequence belongs to the protein kinase superfamily. CMGC Ser/Thr protein kinase family. MAP kinase subfamily. In terms of processing, the phosphorylation on Tyr-221 activates the enzyme. A conserved Thr, which must also be phosphorylated to activate the enzyme in closely related sequences, is replaced by Met-219 in this sequence.

The catalysed reaction is L-seryl-[protein] + ATP = O-phospho-L-seryl-[protein] + ADP + H(+). The enzyme catalyses L-threonyl-[protein] + ATP = O-phospho-L-threonyl-[protein] + ADP + H(+). This chain is Mitogen-activated protein kinase 2 (MPK2), found in Oryza sativa subsp. japonica (Rice).